A 247-amino-acid polypeptide reads, in one-letter code: Terpene cyclase adrI (247 aa).

5 consecutive transmembrane segments (helical) span residues 20–40 (VAEF…FSML), 51–71 (TGIF…FIYP), 76–96 (HWEG…FFII), 112–132 (NLYF…YSFA), and 141–161 (FFYG…AQIL). Asn-164 carries an N-linked (GlcNAc...) asparagine glycan. The next 2 membrane-spanning stretches (helical) occupy residues 179 to 199 (FGGF…GPWF) and 205 to 225 (KFYI…YYVI).

It belongs to the paxB family.

The protein localises to the membrane. Its pathway is secondary metabolite biosynthesis; terpenoid biosynthesis. Functionally, terpene cyclase; part of the gene cluster that mediates the biosynthesis of andrastins, meroterpenoid compounds that exhibit inhibitory activity against ras farnesyltransferase, suggesting that they could be promising leads for antitumor agents. The first step of the pathway is the synthesis of 3,5-dimethylorsellinic acid (DMOA) by the polyketide synthase adrD via condensation of one acetyl-CoA starter unit with 3 malonyl-CoA units and 2 methylations. DMAO is then converted to farnesyl-DMAO by the prenyltransferase adrG. The methyltransferase adrK catalyzes the methylation of the carboxyl group of farnesyl-DMAO to farnesyl-DMAO methyl ester which is further converted to epoxyfarnesyl-DMAO methyl ester by the FAD-dependent monooxygenase adrH. The terpene cyclase adrI then catalyzes the carbon skeletal rearrangement to generate the andrastin E, the first compound in the pathway having the andrastin scaffold, with the tetracyclic ring system. The post-cyclization tailoring enzymes adrF, adrE, adrJ, and adrA, are involved in the conversion of andrastin E into andrastin A. The short chain dehydrogenase adrF is responsible for the oxidation of the C-3 a hydroxyl group of andrastin E to yield the corresponding ketone, andrastin D. The ketoreductase adrE stereoselectively reduces the carbonyl moiety to reverse the stereochemistry of the C-3 position to yield andrastin F. The acetyltransferase adrJ is the acetyltransferase that attaches the acetyl group to the C-3 hydroxyl group of andrastin F to yield andrastin C. Finally, the cytochrome P450 monooxygenase adrA catalyzes two sequential oxidation reactions of the C-23 methyl group, to generate the corresponding alcohol andrastin B, and aldehyde andrastin A. This is Terpene cyclase adrI from Penicillium rubens (strain ATCC 28089 / DSM 1075 / NRRL 1951 / Wisconsin 54-1255) (Penicillium chrysogenum).